Here is a 274-residue protein sequence, read N- to C-terminus: Putative deoxyribonuclease TATDN1 homolog (274 aa).

A divalent metal cation-binding residues include Glu105, His139, His162, and Asp208.

It belongs to the metallo-dependent hydrolases superfamily. TatD-type hydrolase family. A divalent metal cation serves as cofactor.

Its subcellular location is the nucleus. Its function is as follows. Putative deoxyribonuclease. The chain is Putative deoxyribonuclease TATDN1 homolog from Enterocytozoon bieneusi (strain H348) (Microsporidian parasite).